We begin with the raw amino-acid sequence, 144 residues long: Large ribosomal subunit protein uL11 (144 aa).

This sequence belongs to the universal ribosomal protein uL11 family. Part of the ribosomal stalk of the 50S ribosomal subunit. Interacts with L10 and the large rRNA to form the base of the stalk. L10 forms an elongated spine to which L12 dimers bind in a sequential fashion forming a multimeric L10(L12)X complex. In terms of processing, one or more lysine residues are methylated.

In terms of biological role, forms part of the ribosomal stalk which helps the ribosome interact with GTP-bound translation factors. This is Large ribosomal subunit protein uL11 from Neisseria meningitidis serogroup A / serotype 4A (strain DSM 15465 / Z2491).